The following is a 309-amino-acid chain: DDRGK domain-containing protein 1 (309 aa).

At 1–2 (MD) the chain is on the lumenal side. Residues 3–23 (LIILVGIAVALLVVIVTLYLL) form a helical membrane-spanning segment. The Cytoplasmic portion of the chain corresponds to 24 to 309 (QKKNAAPETK…ISAGGGEASS (286 aa)). Disordered stretches follow at residues 32 to 53 (TKVAAAPQRGVPQRAQEGVPRR) and 79 to 175 (ALPA…KEER). Residues 87–96 (DHEDEGQVDG) are compositionally biased toward acidic residues. Residues 107 to 175 (LDEKMGAKKR…DAERLAKEER (69 aa)) show a composition bias toward basic and acidic residues. Positions 120–177 (EAKEQKRLQREQELHDREQRKVKEAKEEAERKQQEDLEAEAERKRVDAERLAKEERER) form a coiled coil.

The protein belongs to the DDRGK1 family. Interacts with Atg9; the interaction is transient.

Its subcellular location is the endoplasmic reticulum membrane. In terms of biological role, substrate adapter for ufmylation, the covalent attachment of the ubiquitin-like modifier UFM1 to substrate proteins. Required for ufmylation of Atg9; protects the nervous system during aging, possibly by stabilizing Atg9 and supporting its function. The chain is DDRGK domain-containing protein 1 from Drosophila melanogaster (Fruit fly).